The following is a 545-amino-acid chain: ATP synthase subunit alpha (545 aa).

172 to 179 provides a ligand contact to ATP; sequence GDRKTGKT.

The protein belongs to the ATPase alpha/beta chains family. F-type ATPases have 2 components, CF(1) - the catalytic core - and CF(0) - the membrane proton channel. CF(1) has five subunits: alpha(3), beta(3), gamma(1), delta(1), epsilon(1). CF(0) has three main subunits: a(1), b(2) and c(9-12). The alpha and beta chains form an alternating ring which encloses part of the gamma chain. CF(1) is attached to CF(0) by a central stalk formed by the gamma and epsilon chains, while a peripheral stalk is formed by the delta and b chains.

The protein resides in the cell membrane. It catalyses the reaction ATP + H2O + 4 H(+)(in) = ADP + phosphate + 5 H(+)(out). Functionally, produces ATP from ADP in the presence of a proton gradient across the membrane. The alpha chain is a regulatory subunit. This Corynebacterium urealyticum (strain ATCC 43042 / DSM 7109) protein is ATP synthase subunit alpha.